The primary structure comprises 295 residues: Cytidine deaminase (295 aa).

CMP/dCMP-type deaminase domains follow at residues 48–168 (TDSE…FGPA) and 187–295 (KETD…YVAA). A substrate-binding site is contributed by 89–91 (NME). His102 provides a ligand contact to Zn(2+). Glu104 (proton donor) is an active-site residue. Zn(2+)-binding residues include Cys129 and Cys132.

Belongs to the cytidine and deoxycytidylate deaminase family. Homodimer. It depends on Zn(2+) as a cofactor.

The enzyme catalyses cytidine + H2O + H(+) = uridine + NH4(+). It catalyses the reaction 2'-deoxycytidine + H2O + H(+) = 2'-deoxyuridine + NH4(+). In terms of biological role, this enzyme scavenges exogenous and endogenous cytidine and 2'-deoxycytidine for UMP synthesis. This Photobacterium profundum (strain SS9) protein is Cytidine deaminase.